Reading from the N-terminus, the 385-residue chain is Enoyl-[acyl-carrier-protein] reductase, mitochondrial (385 aa).

Tyr-78 (proton donor) is an active-site residue. Residues Asn-162, 190–193 (TSGV), 213–215 (RDR), 288–291 (YGGM), 313–315 (YWV), and Lys-378 contribute to the NADP(+) site.

It belongs to the zinc-containing alcohol dehydrogenase family. Quinone oxidoreductase subfamily. As to quaternary structure, homodimer.

Its subcellular location is the mitochondrion matrix. It catalyses the reaction a 2,3-saturated acyl-[ACP] + NADP(+) = a (2E)-enoyl-[ACP] + NADPH + H(+). Catalyzes the NADPH-dependent reduction of trans-2-enoyl thioesters in mitochondrial fatty acid synthesis (fatty acid synthesis type II). Fatty acid chain elongation in mitochondria uses acyl carrier protein (ACP) as an acyl group carrier, but the enzyme accepts both ACP and CoA thioesters as substrates in vitro. Required for respiration and the maintenance of the mitochondrial compartment. This is Enoyl-[acyl-carrier-protein] reductase, mitochondrial (ETR1) from Candida glabrata (strain ATCC 2001 / BCRC 20586 / JCM 3761 / NBRC 0622 / NRRL Y-65 / CBS 138) (Yeast).